Consider the following 338-residue polypeptide: Holliday junction branch migration complex subunit RuvB (338 aa).

Residues 1 to 179 form a large ATPase domain (RuvB-L) region; sequence MTDLTTPIRT…FGIPVRLNFY (179 aa). 9 residues coordinate ATP: L18, R19, G60, K63, T64, T65, R169, Y179, and R216. T64 serves as a coordination point for Mg(2+). The interval 180 to 250 is small ATPAse domain (RuvB-S); sequence THAELEQVIG…AADAALNRLE (71 aa). Residues 253–338 are head domain (RuvB-H); it reads ALGLDAMDRR…AGSQDGLFDK (86 aa). DNA-binding residues include R289, R308, and R313.

Belongs to the RuvB family. As to quaternary structure, homohexamer. Forms an RuvA(8)-RuvB(12)-Holliday junction (HJ) complex. HJ DNA is sandwiched between 2 RuvA tetramers; dsDNA enters through RuvA and exits via RuvB. An RuvB hexamer assembles on each DNA strand where it exits the tetramer. Each RuvB hexamer is contacted by two RuvA subunits (via domain III) on 2 adjacent RuvB subunits; this complex drives branch migration. In the full resolvosome a probable DNA-RuvA(4)-RuvB(12)-RuvC(2) complex forms which resolves the HJ.

Its subcellular location is the cytoplasm. The catalysed reaction is ATP + H2O = ADP + phosphate + H(+). Functionally, the RuvA-RuvB-RuvC complex processes Holliday junction (HJ) DNA during genetic recombination and DNA repair, while the RuvA-RuvB complex plays an important role in the rescue of blocked DNA replication forks via replication fork reversal (RFR). RuvA specifically binds to HJ cruciform DNA, conferring on it an open structure. The RuvB hexamer acts as an ATP-dependent pump, pulling dsDNA into and through the RuvAB complex. RuvB forms 2 homohexamers on either side of HJ DNA bound by 1 or 2 RuvA tetramers; 4 subunits per hexamer contact DNA at a time. Coordinated motions by a converter formed by DNA-disengaged RuvB subunits stimulates ATP hydrolysis and nucleotide exchange. Immobilization of the converter enables RuvB to convert the ATP-contained energy into a lever motion, pulling 2 nucleotides of DNA out of the RuvA tetramer per ATP hydrolyzed, thus driving DNA branch migration. The RuvB motors rotate together with the DNA substrate, which together with the progressing nucleotide cycle form the mechanistic basis for DNA recombination by continuous HJ branch migration. Branch migration allows RuvC to scan DNA until it finds its consensus sequence, where it cleaves and resolves cruciform DNA. The chain is Holliday junction branch migration complex subunit RuvB from Sphingopyxis alaskensis (strain DSM 13593 / LMG 18877 / RB2256) (Sphingomonas alaskensis).